Reading from the N-terminus, the 838-residue chain is AP-4 complex subunit beta (838 aa).

Residues 582 to 673 (NSSKQTTSIN…NQNNNQNNNQ (92 aa)) are hinge. Residues 648–683 (ITDGNQNNNQNNNQNNNQNNNQNNNQNNQNNNNQNN) are disordered. Positions 652 to 683 (NQNNNQNNNQNNNQNNNQNNNQNNQNNNNQNN) are enriched in low complexity. Residues 674–838 (NNQNNNNQNN…LSIPIPKIFN (165 aa)) are ear.

Belongs to the adaptor complexes large subunit family. In terms of assembly, may be part of the adaptor protein complex 4 (AP-4), a heterotetramer composed of two large adaptins (epsilon-type subunitand beta-type subunit), a medium adaptin (mu-type subunit) and a small adaptin (sigma-type).

The protein localises to the golgi apparatus. Its subcellular location is the trans-Golgi network membrane. Functionally, probable component of an adaptor protein complex. Adaptor protein complexes are vesicle coat components involved both in vesicle formation and cargo selection. They control the vesicular transport of proteins in different trafficking pathways. The protein is AP-4 complex subunit beta (ap4b1) of Dictyostelium discoideum (Social amoeba).